We begin with the raw amino-acid sequence, 1070 residues long: Granule associated Rac and RHOG effector protein 1 (1070 aa).

3 disordered regions span residues 681–771 (EQKA…VGAG), 855–992 (SQAM…STLP), and 1032–1070 (SYVQTPPQPPPPPAHKAAPKGFKAFPGKGERRPAYLPQY). The segment covering 692 to 702 (PSLPVPPPPRA) has biased composition (pro residues). 3 stretches are compositionally biased toward low complexity: residues 719 to 742 (PQQQSPKQQQPQVQYYQHLLQPIG), 906 to 924 (AQGDSASSSDETSSANGDS), and 951 to 962 (TSTLPSPPLLTT). The residue at position 723 (S723) is a Phosphoserine. Over residues 977 to 992 (PKAPWQHPSPLPSTLP) the composition is skewed to pro residues. A compositionally biased stretch (low complexity) spans 1046-1058 (HKAAPKGFKAFPG).

In terms of assembly, interacts with AGO2 and TNRC6A.

The protein resides in the cytoplasm. It is found in the P-body. In terms of biological role, acts as an effector of RAC1. Associates with CCR4-NOT complex which is one of the major cellular mRNA deadenylases and is linked to various cellular processes including bulk mRNA degradation, miRNA-mediated repression, translational repression during translational initiation and general transcription regulation. May also play a role in miRNA silencing machinery. The protein is Granule associated Rac and RHOG effector protein 1 of Homo sapiens (Human).